Here is a 95-residue protein sequence, read N- to C-terminus: Aspartyl/glutamyl-tRNA(Asn/Gln) amidotransferase subunit C (95 aa).

This sequence belongs to the GatC family. Heterotrimer of A, B and C subunits.

The enzyme catalyses L-glutamyl-tRNA(Gln) + L-glutamine + ATP + H2O = L-glutaminyl-tRNA(Gln) + L-glutamate + ADP + phosphate + H(+). It catalyses the reaction L-aspartyl-tRNA(Asn) + L-glutamine + ATP + H2O = L-asparaginyl-tRNA(Asn) + L-glutamate + ADP + phosphate + 2 H(+). Allows the formation of correctly charged Asn-tRNA(Asn) or Gln-tRNA(Gln) through the transamidation of misacylated Asp-tRNA(Asn) or Glu-tRNA(Gln) in organisms which lack either or both of asparaginyl-tRNA or glutaminyl-tRNA synthetases. The reaction takes place in the presence of glutamine and ATP through an activated phospho-Asp-tRNA(Asn) or phospho-Glu-tRNA(Gln). The sequence is that of Aspartyl/glutamyl-tRNA(Asn/Gln) amidotransferase subunit C from Rhodopseudomonas palustris (strain BisB18).